Consider the following 63-residue polypeptide: Sarcotoxin-1B (63 aa).

The N-terminal stretch at 1-23 (MNFNKVFIFVALILAVFAGQSQA) is a signal peptide. The residue at position 62 (Arg-62) is an Arginine amide.

Belongs to the cecropin family.

The protein resides in the secreted. Functionally, sarcotoxins, which are potent bactericidal proteins, are produced in response to injury. They are cytotoxic to both Gram-positive and Gram-negative bacteria. This Sarcophaga peregrina (Flesh fly) protein is Sarcotoxin-1B.